Consider the following 209-residue polypeptide: Uridine kinase (209 aa).

An ATP-binding site is contributed by 12 to 19; it reads GGSGSGKT.

Belongs to the uridine kinase family.

It is found in the cytoplasm. It catalyses the reaction uridine + ATP = UMP + ADP + H(+). It carries out the reaction cytidine + ATP = CMP + ADP + H(+). The protein operates within pyrimidine metabolism; CTP biosynthesis via salvage pathway; CTP from cytidine: step 1/3. Its pathway is pyrimidine metabolism; UMP biosynthesis via salvage pathway; UMP from uridine: step 1/1. This is Uridine kinase from Listeria monocytogenes serotype 4b (strain CLIP80459).